The sequence spans 170 residues: Peptide deformylase (170 aa).

Cys-91 and His-133 together coordinate Fe cation. Glu-134 is an active-site residue. His-137 lines the Fe cation pocket.

The protein belongs to the polypeptide deformylase family. Fe(2+) serves as cofactor.

The enzyme catalyses N-terminal N-formyl-L-methionyl-[peptide] + H2O = N-terminal L-methionyl-[peptide] + formate. Its function is as follows. Removes the formyl group from the N-terminal Met of newly synthesized proteins. Requires at least a dipeptide for an efficient rate of reaction. N-terminal L-methionine is a prerequisite for activity but the enzyme has broad specificity at other positions. The polypeptide is Peptide deformylase (Pasteurella multocida (strain Pm70)).